Here is a 121-residue protein sequence, read N- to C-terminus: uncharacterized protein (121 aa).

Disordered regions lie at residues 1–41 (MRRQ…QESR) and 94–121 (GGTISGQQSRNSSLPQAKYYSRHGGLRR). A compositionally biased stretch (polar residues) spans 98–108 (SGQQSRNSSLP).

Predominantly expressed in tissues containing motile cilia. Also expressed in non-motile ciliated adult olfactory bulbs.

It localises to the cytoplasm. The protein localises to the cytoskeleton. The protein resides in the cilium basal body. This is an uncharacterized protein from Mus musculus (Mouse).